Consider the following 249-residue polypeptide: Derlin-2 (249 aa).

Over 1 to 21 the chain is Cytoplasmic; it reads MAQAVEEWYRQMPIITRSYLT. The helical transmembrane segment at 22-42 threads the bilayer; the sequence is AAVVTTVGCTLEIISPYHLYL. Residues 43 to 96 are Lumenal-facing; the sequence is NPKLVVQHYEIWRLVTNFLYFRKMDLDFLFHMFFLARYCKLLEENSFRGRTADF. A helical membrane pass occupies residues 97 to 117; that stretch reads FYMLLFGATVLTGIVLIGGMI. Residues 118–122 are Cytoplasmic-facing; the sequence is PYISE. A helical transmembrane segment spans residues 123-143; the sequence is TFARILFLSNSLTFMMVYVWS. Over 144–152 the chain is Lumenal; the sequence is KHNPFIHMS. Residues 153-173 form a helical membrane-spanning segment; the sequence is FLGLFTFTAAYLPWVLLGFSI. Over 174–249 the chain is Cytoplasmic; that stretch reads LVGSSTWVDL…GAMGADPQAQ (76 aa).

This sequence belongs to the derlin family.

The protein resides in the endoplasmic reticulum membrane. Its function is as follows. May be involved in the degradation process of specific misfolded endoplasmic reticulum (ER) luminal proteins. The protein is Derlin-2 (DER2) of Oryza sativa subsp. japonica (Rice).